We begin with the raw amino-acid sequence, 503 residues long: Maturase K (503 aa).

Belongs to the intron maturase 2 family. MatK subfamily.

The protein localises to the plastid. The protein resides in the chloroplast. Usually encoded in the trnK tRNA gene intron. Probably assists in splicing its own and other chloroplast group II introns. The polypeptide is Maturase K (Stangeria eriopus (Natal grass cycad)).